The following is a 434-amino-acid chain: Histidinol dehydrogenase (434 aa).

NAD(+) contacts are provided by Y130, Q191, and N214. Residues S237, Q259, and H262 each coordinate substrate. Q259 and H262 together coordinate Zn(2+). Catalysis depends on proton acceptor residues E327 and H328. Substrate is bound by residues H328, D361, E415, and H420. A Zn(2+)-binding site is contributed by D361. H420 lines the Zn(2+) pocket.

This sequence belongs to the histidinol dehydrogenase family. Zn(2+) serves as cofactor.

It catalyses the reaction L-histidinol + 2 NAD(+) + H2O = L-histidine + 2 NADH + 3 H(+). It functions in the pathway amino-acid biosynthesis; L-histidine biosynthesis; L-histidine from 5-phospho-alpha-D-ribose 1-diphosphate: step 9/9. Its function is as follows. Catalyzes the sequential NAD-dependent oxidations of L-histidinol to L-histidinaldehyde and then to L-histidine. This is Histidinol dehydrogenase from Rhizobium meliloti (strain 1021) (Ensifer meliloti).